The chain runs to 249 residues: Metallo-beta-lactamase type 2 (249 aa).

The signal sequence occupies residues 1 to 22 (MLKKIKISLILALGLTSLQAFG). Zn(2+)-binding residues include histidine 98, histidine 100, aspartate 102, histidine 161, and cysteine 180. Lysine 183 is a binding site for substrate. Residue histidine 222 participates in Zn(2+) binding.

Belongs to the metallo-beta-lactamase superfamily. Class-B beta-lactamase family. Monomer. Zn(2+) serves as cofactor.

The protein localises to the periplasm. The catalysed reaction is a beta-lactam + H2O = a substituted beta-amino acid. Confers resistance to the different beta-lactams antibiotics (penicillin, cephalosporin and carbapenem) via the hydrolysis of the beta-lactam ring. This Elizabethkingia meningoseptica (Chryseobacterium meningosepticum) protein is Metallo-beta-lactamase type 2 (blaB3).